A 448-amino-acid chain; its full sequence is Glutamyl-tRNA reductase (448 aa).

Residues T52–R55, S105, E110–Q112, and Q116 contribute to the substrate site. The Nucleophile role is filled by C53. Residue G184–G189 coordinates NADP(+). The segment at D406–D435 is disordered.

Belongs to the glutamyl-tRNA reductase family. Homodimer.

The catalysed reaction is (S)-4-amino-5-oxopentanoate + tRNA(Glu) + NADP(+) = L-glutamyl-tRNA(Glu) + NADPH + H(+). It participates in porphyrin-containing compound metabolism; protoporphyrin-IX biosynthesis; 5-aminolevulinate from L-glutamyl-tRNA(Glu): step 1/2. Catalyzes the NADPH-dependent reduction of glutamyl-tRNA(Glu) to glutamate 1-semialdehyde (GSA). The chain is Glutamyl-tRNA reductase from Haloarcula marismortui (strain ATCC 43049 / DSM 3752 / JCM 8966 / VKM B-1809) (Halobacterium marismortui).